Here is a 161-residue protein sequence, read N- to C-terminus: Allophycocyanin beta chain (161 aa).

An N4-methylasparagine modification is found at Asn-71. (2R,3E)-phycocyanobilin is bound at residue Cys-81.

This sequence belongs to the phycobiliprotein family. Heterodimer of an alpha and a beta chain. In terms of processing, contains one covalently linked phycocyanobilin chromophore.

The protein localises to the cellular thylakoid membrane. Its function is as follows. Light-harvesting photosynthetic bile pigment-protein from the phycobiliprotein complex. Allophycocyanin has a maximum absorption at approximately 650 nanometers. This is Allophycocyanin beta chain (apcB) from Mastigocladus laminosus (Fischerella sp.).